Here is a 386-residue protein sequence, read N- to C-terminus: Inactive GDSL esterase/lipase-like protein 23 (386 aa).

Positions 1–29 (MMAKNCNLVSVLCVFLVLTLFNKPITVAG) are cleaved as a signal peptide. Catalysis depends on Ser43, which acts as the Nucleophile. N-linked (GlcNAc...) asparagine glycosylation is found at Asn105, Asn165, and Asn288. Residues Asp322 and His325 contribute to the active site.

It belongs to the 'GDSL' lipolytic enzyme family. As to quaternary structure, part of the PYK10 complex. Interacts with MVP1. Expressed mainly in roots.

It localises to the endoplasmic reticulum. Its function is as follows. Involved in the control of the PYK10 complex size and possibly substrate specificity. May be exported from the endoplasmic reticulum upon interaction with MVP1. The chain is Inactive GDSL esterase/lipase-like protein 23 (GLL23) from Arabidopsis thaliana (Mouse-ear cress).